Reading from the N-terminus, the 2220-residue chain is Non-reducing polyketide synthase stbA (2220 aa).

Residues 10–255 (IFSPQNSPPK…HDATNTDMAQ (246 aa)) form an N-terminal acylcarrier protein transacylase domain (SAT) region. Residues 379-803 (SDAIAVVGAG…GSNSALICSE (425 aa)) enclose the Ketosynthase family 3 (KS3) domain. Catalysis depends on for beta-ketoacyl synthase activity residues cysteine 551, histidine 687, and histidine 726. The tract at residues 906–1207 (LAFSGQSRTN…ADATQHTFQA (302 aa)) is malonyl-CoA:ACP transacylase (MAT) domain. Residue serine 993 is the For acyl/malonyl transferase activity of the active site. The interval 1287-1414 (EPRAAQLVRY…GDFTMTAGPH (128 aa)) is N-terminal hotdog fold. The PKS/mFAS DH domain maps to 1287–1589 (EPRAAQLVRY…FHKTSMTKLL (303 aa)). Residues 1292–1588 (QLVRYKGALG…HFHKTSMTKL (297 aa)) are product template (PT) domain. The Proton acceptor; for dehydratase activity role is filled by histidine 1323. The tract at residues 1436-1589 (DAEKLRKRTA…FHKTSMTKLL (154 aa)) is C-terminal hotdog fold. Aspartate 1500 (proton donor; for dehydratase activity) is an active-site residue. Carrier domains are found at residues 1634-1711 (AAGP…SGGA) and 1742-1821 (PAGP…AADV). Residues serine 1671 and serine 1779 each carry the O-(pantetheine 4'-phosphoryl)serine modification. Positions 1879–2210 (TRFRMETVVY…YDFIFTELEN (332 aa)) are thioesterase (TE) domain. Catalysis depends on for thioesterase activity residues serine 1999 and aspartate 2148.

It carries out the reaction 3 malonyl-CoA + acetyl-CoA + 2 H(+) = orsellinate + 3 CO2 + 4 CoA. It participates in secondary metabolite biosynthesis; terpenoid biosynthesis. Functionally, non-reducing polyketide synthase; part of the cluster that mediates the biosynthesis of LL-Z1272-beta, also known as ilicicolin B, a prenylated aryl-aldehyde produced by several fungi and that serves as a key pathway intermediate for many fungal meroterpenoids. The first step in the pathway is performed by the non-reducing polyketide synthase stbA that produces orsellinic acid by condensing acetyl-CoA with 3 malonyl-CoA units. The prenyltransferase stbC then prenylates orsenilic acid into grifolic acid. Finally, grifolic acid is reduced to ilicicolin B by the NRPS-like protein stbB. This chain is Non-reducing polyketide synthase stbA, found in Stachybotrys bisbyi (Hyalostachybotrys bisbyi).